A 348-amino-acid polypeptide reads, in one-letter code: Probable dual-specificity RNA methyltransferase RlmN (348 aa).

E93 (proton acceptor) is an active-site residue. In terms of domain architecture, Radical SAM core spans 99 to 333 (TEKRLTACLS…VSFRKSRGLD (235 aa)). The cysteines at positions 106 and 338 are disulfide-linked. [4Fe-4S] cluster contacts are provided by C113, C117, and C120. S-adenosyl-L-methionine is bound by residues 160–161 (GE), S190, 219–221 (SLH), and N295. The active-site S-methylcysteine intermediate is C338.

This sequence belongs to the radical SAM superfamily. RlmN family. [4Fe-4S] cluster serves as cofactor.

The protein localises to the cytoplasm. The catalysed reaction is adenosine(2503) in 23S rRNA + 2 reduced [2Fe-2S]-[ferredoxin] + 2 S-adenosyl-L-methionine = 2-methyladenosine(2503) in 23S rRNA + 5'-deoxyadenosine + L-methionine + 2 oxidized [2Fe-2S]-[ferredoxin] + S-adenosyl-L-homocysteine. It catalyses the reaction adenosine(37) in tRNA + 2 reduced [2Fe-2S]-[ferredoxin] + 2 S-adenosyl-L-methionine = 2-methyladenosine(37) in tRNA + 5'-deoxyadenosine + L-methionine + 2 oxidized [2Fe-2S]-[ferredoxin] + S-adenosyl-L-homocysteine. In terms of biological role, specifically methylates position 2 of adenine 2503 in 23S rRNA and position 2 of adenine 37 in tRNAs. In Prochlorococcus marinus (strain MIT 9312), this protein is Probable dual-specificity RNA methyltransferase RlmN.